The chain runs to 213 residues: Glutathione S-transferase DHAR2 (213 aa).

The residue at position 6 (C6) is an S-glutathionyl cysteine. Glutathione is bound by residues K8 and D19. 2 residues coordinate L-ascorbate: K8 and D19. One can recognise a GST N-terminal domain in the interval 10 to 83 (AVGAPDVLGD…DVIVGLLEEK (74 aa)). C20 carries the post-translational modification S-glutathionyl cysteine. The Nucleophile role is filled by C20. Residues 20–25 (CPFSQR) carry the Glutathione-binding motif. Glutathione is bound by residues K47, V60, S73, H160, and W207. Residues 84 to 213 (YPEPSLKTPP…VAGWESKVNA (130 aa)) form the GST C-terminal domain. K210 lines the L-ascorbate pocket.

The protein belongs to the GST superfamily. DHAR family. In terms of assembly, monomer. Spontaneous S-glutathionylation in the presence of oxidized glutathione (GSSG).

It is found in the cytoplasm. Its subcellular location is the cytosol. The enzyme catalyses RX + glutathione = an S-substituted glutathione + a halide anion + H(+). The catalysed reaction is L-dehydroascorbate + 2 glutathione = glutathione disulfide + L-ascorbate. Its function is as follows. Displays a dual function. As a soluble protein, exhibits glutathione-dependent thiol transferase and dehydroascorbate (DHA) reductase activities. Exhibits glutathione-dependent thiol transferase and dehydroascorbate (DHA) reductase activities. Key component of the ascorbate recycling system. Involved in the redox homeostasis, especially in scavenging of ROS under oxidative stresses. Plays a role in ozone tolerance. This Arabidopsis thaliana (Mouse-ear cress) protein is Glutathione S-transferase DHAR2 (DHAR2).